Consider the following 200-residue polypeptide: Protein C2-DOMAIN ABA-RELATED 5 (200 aa).

The C2 domain occupies 22 to 142; it reads VAGEKHKDRR…LKMHLHDLPS (121 aa). The Ca(2+) site is built by Arg57, Asp58, Asp63, Asp109, Tyr110, Asp111, and Asp117.

This sequence belongs to the plant CAR protein family. In terms of assembly, binds to PYR/PYL/RCAR abscisic acid intracellular receptors in an ABA-independent manner, both at the plasma membrane and in the nucleus.

Its subcellular location is the cell membrane. The protein resides in the nucleus. Functionally, stimulates the GTPase/ATPase activities of Obg-like ATPases. Mediates the transient calcium-dependent interaction of PYR/PYL/RCAR abscisic acid (ABA) receptors with the plasma membrane and thus regulates ABA sensitivity. In Arabidopsis thaliana (Mouse-ear cress), this protein is Protein C2-DOMAIN ABA-RELATED 5.